The primary structure comprises 358 residues: Probable anti-sigma-M factor YhdL (358 aa).

The chain crosses the membrane as a helical span at residues 74–96 (ISVLAVISTLMILPLCTLGSYLY).

The N-terminus of YhdL interacts with sigma-M. YhdL interacts specifically with YhdK.

It is found in the membrane. The sequence is that of Probable anti-sigma-M factor YhdL (yhdL) from Bacillus subtilis (strain 168).